The following is a 184-amino-acid chain: Ferredoxin-thioredoxin reductase subunit A2, chloroplastic (184 aa).

A chloroplast-targeting transit peptide spans 1-71 (MTNSYALSPA…SRKNPKSTIR (71 aa)).

Belongs to the ferredoxin thioredoxin reductase alpha subunit family. As to quaternary structure, heterodimer of subunit A (variable subunit) and subunit B (catalytic subunit). Heterodimeric FTR forms a complex with ferredoxin and thioredoxin.

The protein localises to the plastid. It localises to the chloroplast. Variable subunit of the ferredoxin-thioredoxin reductase (FTR), which catalyzes the two-electron reduction of thioredoxins by the electrons provided by reduced ferredoxin. The polypeptide is Ferredoxin-thioredoxin reductase subunit A2, chloroplastic (Arabidopsis thaliana (Mouse-ear cress)).